A 355-amino-acid chain; its full sequence is UDP-N-acetylglucosamine--N-acetylmuramyl-(pentapeptide) pyrophosphoryl-undecaprenol N-acetylglucosamine transferase (355 aa).

Residues 13–15 (TGG), asparagine 125, arginine 162, serine 190, isoleucine 244, and glutamine 289 each bind UDP-N-acetyl-alpha-D-glucosamine.

It belongs to the glycosyltransferase 28 family. MurG subfamily.

The protein resides in the cell inner membrane. It catalyses the reaction di-trans,octa-cis-undecaprenyl diphospho-N-acetyl-alpha-D-muramoyl-L-alanyl-D-glutamyl-meso-2,6-diaminopimeloyl-D-alanyl-D-alanine + UDP-N-acetyl-alpha-D-glucosamine = di-trans,octa-cis-undecaprenyl diphospho-[N-acetyl-alpha-D-glucosaminyl-(1-&gt;4)]-N-acetyl-alpha-D-muramoyl-L-alanyl-D-glutamyl-meso-2,6-diaminopimeloyl-D-alanyl-D-alanine + UDP + H(+). It participates in cell wall biogenesis; peptidoglycan biosynthesis. Its function is as follows. Cell wall formation. Catalyzes the transfer of a GlcNAc subunit on undecaprenyl-pyrophosphoryl-MurNAc-pentapeptide (lipid intermediate I) to form undecaprenyl-pyrophosphoryl-MurNAc-(pentapeptide)GlcNAc (lipid intermediate II). This Neisseria meningitidis serogroup C / serotype 2a (strain ATCC 700532 / DSM 15464 / FAM18) protein is UDP-N-acetylglucosamine--N-acetylmuramyl-(pentapeptide) pyrophosphoryl-undecaprenol N-acetylglucosamine transferase.